Here is a 149-residue protein sequence, read N- to C-terminus: Large ribosomal subunit protein uL13 (149 aa).

This sequence belongs to the universal ribosomal protein uL13 family. In terms of assembly, part of the 50S ribosomal subunit.

This protein is one of the early assembly proteins of the 50S ribosomal subunit, although it is not seen to bind rRNA by itself. It is important during the early stages of 50S assembly. The sequence is that of Large ribosomal subunit protein uL13 from Gemmatimonas aurantiaca (strain DSM 14586 / JCM 11422 / NBRC 100505 / T-27).